The primary structure comprises 443 residues: Differentially expressed in FDCP 8 homolog A (443 aa).

The segment at 1–49 (MEYDDKLVRFRQGHLNPFDKQGGAERHPADSEAQPPKDSSTISPHSIPE) is disordered. 2 Phorbol-ester/DAG-type zinc fingers span residues 134 to 185 (EHRF…TKPC) and 364 to 424 (IHTT…STSC).

Belongs to the DEF8 family.

Functionally, positively regulates lysosome peripheral distribution and ruffled border formation in osteoclasts. Involved in bone resorption. This chain is Differentially expressed in FDCP 8 homolog A (def8-a), found in Xenopus laevis (African clawed frog).